We begin with the raw amino-acid sequence, 525 residues long: uncharacterized protein (525 aa).

The signal sequence occupies residues 1-21 (MLECLSALLVLFAGGGGSVLA). At 22-448 (AVQSKTVADP…ISAASQLDER (427 aa)) the chain is on the extracellular side. The disordered stretch occupies residues 242–264 (KVSSENCSKDTDDKSGSKKERNT). Residues 449 to 469 (IFIFTAITVSITTLMMLGFSY) form a helical membrane-spanning segment. Residues 470–525 (RSRVSFRDHSIDDSDDDNDWSDDEVEFDEEYFYSLPVSIPEKGISLDKMAQQLGVE) are Cytoplasmic-facing.

It is found in the membrane. This is an uncharacterized protein from Saccharomyces cerevisiae (strain RM11-1a) (Baker's yeast).